Reading from the N-terminus, the 306-residue chain is N-acetylmuramic acid 6-phosphate etherase (306 aa).

The region spanning isoleucine 55–lysine 218 is the SIS domain. The active-site Proton donor is glutamate 83. Glutamate 114 is an active-site residue.

The protein belongs to the GCKR-like family. MurNAc-6-P etherase subfamily. Homodimer.

The enzyme catalyses N-acetyl-D-muramate 6-phosphate + H2O = N-acetyl-D-glucosamine 6-phosphate + (R)-lactate. Its pathway is amino-sugar metabolism; N-acetylmuramate degradation. Specifically catalyzes the cleavage of the D-lactyl ether substituent of MurNAc 6-phosphate, producing GlcNAc 6-phosphate and D-lactate. This chain is N-acetylmuramic acid 6-phosphate etherase, found in Caldanaerobacter subterraneus subsp. tengcongensis (strain DSM 15242 / JCM 11007 / NBRC 100824 / MB4) (Thermoanaerobacter tengcongensis).